A 128-amino-acid polypeptide reads, in one-letter code: Small ribosomal subunit protein bS6 (128 aa).

This sequence belongs to the bacterial ribosomal protein bS6 family.

Functionally, binds together with bS18 to 16S ribosomal RNA. This is Small ribosomal subunit protein bS6 from Acinetobacter baylyi (strain ATCC 33305 / BD413 / ADP1).